The chain runs to 435 residues: Methionine aminopeptidase 2-2 (435 aa).

The interval 1-92 (MAAQTTEKLQ…VPVSNLFPNN (92 aa)) is disordered. Residues 24–33 (DAPAAGQAEA) show a composition bias toward low complexity. Positions 34–45 (GEAEEDSDDEKD) are enriched in acidic residues. Residues 59–73 (AKKKKRKSKKKKKGG) show a composition bias toward basic residues. Residue histidine 197 coordinates substrate. A divalent metal cation-binding residues include aspartate 217, aspartate 228, and histidine 297. Substrate is bound at residue histidine 305. A divalent metal cation is bound by residues glutamate 330 and glutamate 425.

The protein belongs to the peptidase M24A family. Methionine aminopeptidase eukaryotic type 2 subfamily. Co(2+) is required as a cofactor. Requires Zn(2+) as cofactor. It depends on Mn(2+) as a cofactor. The cofactor is Fe(2+).

Its subcellular location is the cytoplasm. The enzyme catalyses Release of N-terminal amino acids, preferentially methionine, from peptides and arylamides.. Its function is as follows. Cotranslationally removes the N-terminal methionine from nascent proteins. The N-terminal methionine is often cleaved when the second residue in the primary sequence is small and uncharged (Met-Ala-, Cys, Gly, Pro, Ser, Thr, or Val). This chain is Methionine aminopeptidase 2-2, found in Aspergillus clavatus (strain ATCC 1007 / CBS 513.65 / DSM 816 / NCTC 3887 / NRRL 1 / QM 1276 / 107).